The sequence spans 378 residues: 1-acyl-sn-glycerol-3-phosphate acyltransferase delta (378 aa).

A helical membrane pass occupies residues 11–31 (FLCHLVFCYVFIASGLIVNAI). The HXXXXD motif motif lies at 96–101 (HKFEID). 3 consecutive transmembrane segments (helical) span residues 125-145 (ELAY…IFCT), 311-331 (WLFW…SMVS), and 338-358 (LASL…MIGV).

The protein belongs to the 1-acyl-sn-glycerol-3-phosphate acyltransferase family. Expressed at a high levels in the brain, at intermediate or low levels in skeletal muscles, gut, kidney, spleen and lung. Barely detectable in heart and liver.

The protein localises to the endoplasmic reticulum membrane. It catalyses the reaction a 1-acyl-sn-glycero-3-phosphate + an acyl-CoA = a 1,2-diacyl-sn-glycero-3-phosphate + CoA. The catalysed reaction is (4Z,7Z,10Z,13Z,16Z,19Z)-docosahexaenoyl-CoA + 1-hexadecanoyl-sn-glycero-3-phosphate = 1-hexadecanoyl-2-(4Z,7Z,10Z,13Z,16Z,19Z-docosahexaenoyl)-sn-glycero-3-phosphate + CoA. The enzyme catalyses 1-octadecanoyl-sn-glycero-3-phosphate + (9Z,12Z)-octadecadienoyl-CoA = 1-octadecanoyl-2-(9Z,12Z-octadecadienoyl)-sn-glycero-3-phosphate + CoA. It carries out the reaction 1-octadecanoyl-sn-glycero-3-phosphate + (4Z,7Z,10Z,13Z,16Z,19Z)-docosahexaenoyl-CoA = 1-octadecanoyl-2-(4Z,7Z,10Z,13Z,16Z,19Z-docosahexaenoyl)-sn-glycero-3-phosphate + CoA. It catalyses the reaction (4Z,7Z,10Z,13Z,16Z,19Z)-docosahexaenoyl-CoA + 1-(9Z-octadecenoyl)-sn-glycero-3-phosphate = 1-(9Z-octadecenoyl)-2-(4Z,7Z,10Z,13Z,16Z,19Z-docosahexaenoyl)-sn-glycero-3-phosphate + CoA. Its pathway is phospholipid metabolism; CDP-diacylglycerol biosynthesis; CDP-diacylglycerol from sn-glycerol 3-phosphate: step 2/3. Functionally, converts 1-acyl-sn-glycerol-3-phosphate (lysophosphatidic acid or LPA) into 1,2-diacyl-sn-glycerol-3-phosphate (phosphatidic acid or PA) by incorporating an acyl moiety at the sn-2 position of the glycerol backbone. Exhibits high acyl-CoA specificity for polyunsaturated fatty acyl-CoA, especially docosahexaenoyl-CoA (22:6-CoA, DHA-CoA). In Mus musculus (Mouse), this protein is 1-acyl-sn-glycerol-3-phosphate acyltransferase delta (Agpat4).